A 237-amino-acid polypeptide reads, in one-letter code: Lectin (237 aa).

Asn-69 carries N-linked (GlcNAc...) asparagine glycosylation. Ile-106 bears the Blocked amino end (Ile) mark. Glu-115 and Asp-117 together coordinate Mn(2+). Residues Asp-117, Tyr-120, Asn-122, and Asp-127 each coordinate Ca(2+). Mn(2+) is bound by residues Asp-127 and His-132.

The protein belongs to the leguminous lectin family. Tetramer of two alpha and two beta chains. The N-terminus of alpha chain is blocked. The alpha and beta chains are produced by proteolytic processing, with probably the loss of intervening amino acid(s).

D-mannose/D-glucose-binding lectin. Requires Ca(2+) and Mn(2+) ions for full activity. The chain is Lectin from Lablab purpureus (Hyacinth bean).